A 1226-amino-acid polypeptide reads, in one-letter code: MDKEERKIINQGQEDEMEIYGYNLSRWKLAIVSLGVICTGGFLLLLLYWMPEWRVKATCVRAAIKDCDVVLLRTTDEFKMWFCAKIRVLSLETHPISSPKSMSNKLSNGHAVCLTENPTGENRHGISKYSQAESQQIRYFTHHSVKYFWNDTIHNFDFLKGLDEGVSCTSIYEKHSAGLTKGMHAYRKLLYGVNEIAVKVPSVFKLLIKEVLNPFYIFQLFSVILWSTDEYYYYALAIVVMSIVSIVSSLYSIRKQYVMLHDMVATHSTVRVSVCRVNEEIEEIFSTDLVPGDVMVIPLNGTIMPCDAVLINGTCIVNESMLTGESVPVTKTNLPNPSVDVKGIGDELYNPETHKRHTLFCGTTVIQTRFYTGELVKAIVVRTGFSTSKGQLVRSILYPKPTDFKLYRDAYLFLLCLVAVAGIGFIYTIINSILNEVQVGVIIIESLDIITITVPPALPAAMTAGIVYAQRRLKKIGIFCISPQRINICGQLNLVCFDKTGTLTEDGLDLWGIQRVENARFLSPEENVCNEMLVKSQFVACLATCHSLTKIEGVLSGDPLDLKMFEAIGWILEEATEEETALHNRIMPTVVRPPKQLLPESTPAGNQEMELFELPAIYEIGIVRQFPFSSALQRMSVVARVLGDKKMDAYMKGAPEVIASLCKPETVPVDFQNVLEDFTKQGFRVIALAHRKLESKLTWHKVQNISRDAIENNMDFMGLIIMQNKLKQETPAVLEDLHKANIRTVMVTGDNMLTAVSVARDCGMILPQDKVIIAEALPPKDGKVAKINWHYADSLTQCSHPSAIASEATPVKLVHDSLEDLQMTRYHFAMNGKSFSVILEHFQDLVPKLMLHGTVFARMAPDQKTQLIEALQNVDYFVGMCGDGANDCGALKRAHGGISLSELEASVASPFTSKTPSISCVPNLIREGRAALITSFCVFKFMALYSIIQYFSVTLLYSILSNLGDFQFLFIDLAIILVVVFTMSLNPAWKELVAQRPPSGLISGALLFSVLSQIIICIGFQSLGFFWVKQQPWYEVWHPKSDACNATGSLLWNSSHLDNETELDEHNIQNYENTTVFFISSFQYLIVAIAFSKGKPFRQPCYKNYFFVFSVIFLYVFILFIMLYPVASVDQVLQIVCVPYQWRVTMLIIVLVNAFVSITVEESVDRWRKCCLPWALSCGKKIPKAKYMYLAQELLVDPEWPPKPQTTTEAKGLVKENGSCQIITIT.

Topologically, residues 1 to 28 are cytoplasmic; that stretch reads MDKEERKIINQGQEDEMEIYGYNLSRWK. The stretch at 29–49 is an intramembrane region; that stretch reads LAIVSLGVICTGGFLLLLLYW. Residues 50 to 205 lie on the Cytoplasmic side of the membrane; it reads MPEWRVKATC…IAVKVPSVFK (156 aa). S98 is modified (phosphoserine). The chain crosses the membrane as a helical span at residues 206–226; that stretch reads LLIKEVLNPFYIFQLFSVILW. Topologically, residues 227 to 232 are lumenal; the sequence is STDEYY. The helical transmembrane segment at 233-253 threads the bilayer; it reads YYALAIVVMSIVSIVSSLYSI. Residues 254–409 lie on the Cytoplasmic side of the membrane; that stretch reads RKQYVMLHDM…KPTDFKLYRD (156 aa). A helical membrane pass occupies residues 410–430; sequence AYLFLLCLVAVAGIGFIYTII. Residues 431-448 are Lumenal-facing; that stretch reads NSILNEVQVGVIIIESLD. Residues 449 to 469 form a helical membrane-spanning segment; that stretch reads IITITVPPALPAAMTAGIVYA. Residues 470–940 are Cytoplasmic-facing; the sequence is QRRLKKIGIF…ALITSFCVFK (471 aa). The active-site 4-aspartylphosphate intermediate is the D498. Residues D498 and T500 each coordinate Mg(2+). ATP contacts are provided by residues 498–500, F628, R684, and D750; that span reads DKT. Position 817 is a phosphoserine (S817). Mg(2+) is bound at residue D883. ATP is bound at residue 883–887; the sequence is DGAND. Residues 941–961 form a helical membrane-spanning segment; it reads FMALYSIIQYFSVTLLYSILS. Position 962 (N962) is a topological domain, lumenal. A helical transmembrane segment spans residues 963–983; that stretch reads LGDFQFLFIDLAIILVVVFTM. Residues 984 to 999 are Cytoplasmic-facing; sequence SLNPAWKELVAQRPPS. A helical transmembrane segment spans residues 1000-1020; that stretch reads GLISGALLFSVLSQIIICIGF. The Lumenal segment spans residues 1021 to 1073; that stretch reads QSLGFFWVKQQPWYEVWHPKSDACNATGSLLWNSSHLDNETELDEHNIQNYEN. The helical transmembrane segment at 1074-1094 threads the bilayer; that stretch reads TTVFFISSFQYLIVAIAFSKG. Topologically, residues 1095–1105 are cytoplasmic; it reads KPFRQPCYKNY. Residues 1106–1126 form a helical membrane-spanning segment; sequence FFVFSVIFLYVFILFIMLYPV. The Lumenal portion of the chain corresponds to 1127–1143; that stretch reads ASVDQVLQIVCVPYQWR. Residues 1144–1164 traverse the membrane as a helical segment; it reads VTMLIIVLVNAFVSITVEESV. Residues 1165 to 1226 lie on the Cytoplasmic side of the membrane; that stretch reads DRWRKCCLPW…NGSCQIITIT (62 aa).

This sequence belongs to the cation transport ATPase (P-type) (TC 3.A.3) family. Type V subfamily.

It localises to the recycling endosome membrane. Its subcellular location is the early endosome membrane. The protein resides in the late endosome membrane. The enzyme catalyses putrescine(out) + ATP + H2O = putrescine(in) + ADP + phosphate + H(+). ATP-driven pump involved in endocytosis-dependent polyamine transport. Uses ATP as an energy source to transfer polyamine precursor putrescine from the endosomal compartment to the cytosol. The sequence is that of Polyamine-transporting ATPase 13A3 (ATP13A3) from Macaca fascicularis (Crab-eating macaque).